Here is a 408-residue protein sequence, read N- to C-terminus: Zinc finger protein 764 (408 aa).

The KRAB domain occupies 26-97; it reads VSFADVAVYF…AAQDPEVAKC (72 aa). The tract at residues 91 to 167 is disordered; sequence DPEVAKCQTQ…GRPSLCAHPP (77 aa). 7 consecutive C2H2-type zinc fingers follow at residues 175 to 197, 203 to 225, 231 to 253, 259 to 281, 287 to 309, 315 to 337, and 343 to 365; these read HGCYVCGKSFAWRSTLVEHVYSH, FHCTDCGKGFGHASSLSKHRAIH, HRCLECGRAFTQRSALTSHLRVH, YGCADCGRRFSQSSALYQHRRVH, FPCPDCGRAFAYPSDLRRHVRTH, YPCPDCGRCFRQSSEMAAHRRTH, and YPCPQCGRRFGQKSAVAKHQWVH.

It belongs to the krueppel C2H2-type zinc-finger protein family. As to quaternary structure, interacts (via KRAB domain) with NR3C1/GR (via NR LBD domain); the interaction regulates transcription factor activity of NR3C1 by directing its actions toward certain biologic pathways.

The protein localises to the nucleus. In terms of biological role, zinc finger protein that functions as a cofactor for steroid hormone receptors, such as NR3C1/GR. Directs NR3C1/GR transcriptional activity toward specific biologic pathways by changing NR3C1/GR binding and transcriptional activity on the glucocorticoid-responsive genes. The chain is Zinc finger protein 764 from Homo sapiens (Human).